The following is a 349-amino-acid chain: Increased DNA methylation 2 (349 aa).

The segment at 210-230 (EDNAGTCTSGEESDVAAKPEV) is disordered. Positions 233-349 (EAHGGLMVGL…VMKNLQKQTV (117 aa)) constitute a sHSP domain.

Belongs to the small heat shock protein (HSP20) family. In terms of assembly, homodimer or oligomer. May form an 16-mer complex. Interacts with MBD7 (via C-terminus). Interacts with IDM1 (via N-terminus). Interacts with IMD3. Part of a complex made of MBD7, IDM1, IDM2, IDM3 and ROS1. Expressed in cotyledons and hypocotyls in young seedlings.

It localises to the nucleus. It is found in the nucleoplasm. Its function is as follows. Prevents DNA hypermethylation and transcriptional silencing of transgenes and of some endogenous genes. May act as a molecular chaperone of IDM1, regulating its H3K18 acetylation activity. This chain is Increased DNA methylation 2, found in Arabidopsis thaliana (Mouse-ear cress).